Reading from the N-terminus, the 171-residue chain is Orotate phosphoribosyltransferase (171 aa).

5-phospho-alpha-D-ribose 1-diphosphate-binding positions include Arg85, Lys86, Arg88, His90, and 110–118; that span reads EDVVTTGNS. Thr114 and Arg142 together coordinate orotate.

The protein belongs to the purine/pyrimidine phosphoribosyltransferase family. PyrE subfamily. As to quaternary structure, homodimer. Mg(2+) is required as a cofactor.

The catalysed reaction is orotidine 5'-phosphate + diphosphate = orotate + 5-phospho-alpha-D-ribose 1-diphosphate. Its pathway is pyrimidine metabolism; UMP biosynthesis via de novo pathway; UMP from orotate: step 1/2. Catalyzes the transfer of a ribosyl phosphate group from 5-phosphoribose 1-diphosphate to orotate, leading to the formation of orotidine monophosphate (OMP). This is Orotate phosphoribosyltransferase from Thermoplasma acidophilum (strain ATCC 25905 / DSM 1728 / JCM 9062 / NBRC 15155 / AMRC-C165).